The primary structure comprises 137 residues: Small heat shock protein IbpA (137 aa).

The 110-residue stretch at 28 to 137 folds into the sHSP domain; that stretch reads SQSNGGYPPY…ANKPRRIEIN (110 aa).

Belongs to the small heat shock protein (HSP20) family. Monomer. Forms homomultimers of about 100-150 subunits at optimal growth temperatures. Conformation changes to monomers at high temperatures or high ionic concentrations.

The protein resides in the cytoplasm. In terms of biological role, associates with aggregated proteins, together with IbpB, to stabilize and protect them from irreversible denaturation and extensive proteolysis during heat shock and oxidative stress. Aggregated proteins bound to the IbpAB complex are more efficiently refolded and reactivated by the ATP-dependent chaperone systems ClpB and DnaK/DnaJ/GrpE. Its activity is ATP-independent. This is Small heat shock protein IbpA from Klebsiella pneumoniae (strain 342).